The primary structure comprises 861 residues: Integrator complex subunit 6-like (861 aa).

In terms of domain architecture, VWFA spans 3–227 (ILLFLIDTSA…QCLESLVQKV (225 aa)). The disordered stretch occupies residues 605–626 (PQNKVKRPGEPNSPMSSKRRRS). The residue at position 617 (Ser-617) is a Phosphoserine.

In Homo sapiens (Human), this protein is Integrator complex subunit 6-like (INTS6L).